The sequence spans 269 residues: Formamidopyrimidine-DNA glycosylase (269 aa).

Proline 2 acts as the Schiff-base intermediate with DNA in catalysis. The Proton donor role is filled by glutamate 3. Lysine 57 serves as the catalytic Proton donor; for beta-elimination activity. DNA contacts are provided by histidine 90, arginine 109, and lysine 150. The FPG-type zinc-finger motif lies at 235-269; sequence QVYGKAGESCPECGEAIQELKIGQRNTFYCSYCQC. Catalysis depends on arginine 259, which acts as the Proton donor; for delta-elimination activity.

This sequence belongs to the FPG family. In terms of assembly, monomer. Requires Zn(2+) as cofactor.

The catalysed reaction is Hydrolysis of DNA containing ring-opened 7-methylguanine residues, releasing 2,6-diamino-4-hydroxy-5-(N-methyl)formamidopyrimidine.. It carries out the reaction 2'-deoxyribonucleotide-(2'-deoxyribose 5'-phosphate)-2'-deoxyribonucleotide-DNA = a 3'-end 2'-deoxyribonucleotide-(2,3-dehydro-2,3-deoxyribose 5'-phosphate)-DNA + a 5'-end 5'-phospho-2'-deoxyribonucleoside-DNA + H(+). Functionally, involved in base excision repair of DNA damaged by oxidation or by mutagenic agents. Acts as a DNA glycosylase that recognizes and removes damaged bases. Has a preference for oxidized purines, such as 7,8-dihydro-8-oxoguanine (8-oxoG). Has AP (apurinic/apyrimidinic) lyase activity and introduces nicks in the DNA strand. Cleaves the DNA backbone by beta-delta elimination to generate a single-strand break at the site of the removed base with both 3'- and 5'-phosphates. This is Formamidopyrimidine-DNA glycosylase from Vibrio vulnificus (strain YJ016).